We begin with the raw amino-acid sequence, 522 residues long: Sorting nexin-1 (522 aa).

Disordered stretches follow at residues 1–89 (MASG…QDLF) and 115–142 (SLPPQEAPNSSKHQPTYEELEEEEQEDQ). A phosphoserine mark is found at S32 and S39. The segment covering 35-45 (EAGDSDTEGED) has biased composition (acidic residues). Phosphothreonine is present on residues T41 and T48. Residues S58 and S72 each carry the phosphoserine modification. Residues 60 to 73 (KRTTSLLPINNGSK) show a composition bias toward polar residues. Residues 132-142 (EELEEEEQEDQ) show a composition bias toward acidic residues. The PX domain maps to 143–272 (FDLTVGITDP…EFLEKEELPR (130 aa)). Residues R186, S188, and K214 each coordinate a 1,2-diacyl-sn-glycero-3-phospho-(1D-myo-inositol-3-phosphate). The residue at position 188 (S188) is a Phosphoserine. K237 is subject to N6-acetyllysine. R238 is a binding site for a 1,2-diacyl-sn-glycero-3-phospho-(1D-myo-inositol-3-phosphate). S280 bears the Phosphoserine mark. The interval 281–298 (GAGLLKMFNKATDAVSKM) is membrane-binding amphipathic helix. The 221-residue stretch at 302–522 (MNESDIWFEE…AFLPEAKAIS (221 aa)) folds into the BAR domain.

Belongs to the sorting nexin family. Predominantly forms heterodimers with BAR domain-containing sorting nexins SNX5, SNX6 and SNX32; can self-associate to form homodimers. The heterodimers are proposed to self-assemble into helical arrays on the membrane to stabilize and expand local membrane curvature underlying endosomal tubule formation. Thought to be a component of the originally described retromer complex (also called SNX-BAR retromer) which is a pentamer containing the heterotrimeric retromer cargo-selective complex (CSC), also described as vacuolar protein sorting subcomplex (VPS) and a heterodimeric membrane-deforming subcomplex formed between SNX1 or SNX2 and SNX5 or SNX6 (also called SNX-BAR subcomplex); the respective CSC and SNX-BAR subcomplexes associate with low affinity. Interacts with SNX5, SNX6, SNX32, VPS26A, VPS29, VPS35, DRD5, DENND5A, KALRN, RHOG (GDP-bound form). The interaction with SNX2 is reported controversially. Interacts with DNAJC13; prevented by presence of HGS. Interacts with HGS.

The protein localises to the endosome membrane. Its subcellular location is the golgi apparatus. The protein resides in the trans-Golgi network membrane. It is found in the early endosome membrane. It localises to the cell projection. The protein localises to the lamellipodium. Its function is as follows. Involved in several stages of intracellular trafficking. Interacts with membranes containing phosphatidylinositol 3-phosphate (PtdIns(3P)) or phosphatidylinositol 3,5-bisphosphate (PtdIns(3,5)P2). Acts in part as component of the retromer membrane-deforming SNX-BAR subcomplex. The SNX-BAR retromer mediates retrograde transport of cargo proteins from endosomes to the trans-Golgi network (TGN) and is involved in endosome-to-plasma membrane transport for cargo protein recycling. The SNX-BAR subcomplex functions to deform the donor membrane into a tubular profile called endosome-to-TGN transport carrier (ETC). Can sense membrane curvature and has in vitro vesicle-to-membrane remodeling activity. Involved in retrograde endosome-to-TGN transport of lysosomal enzyme receptors (IGF2R, M6PR and SORT1). Plays a role in targeting ligand-activated EGFR to the lysosomes for degradation after endocytosis from the cell surface and release from the Golgi. Involvement in retromer-independent endocytic trafficking of P2RY1 and lysosomal degradation of protease-activated receptor-1/F2R. Promotes KALRN- and RHOG-dependent but retromer-independent membrane remodeling such as lamellipodium formation; the function is dependent on GEF activity of KALRN. Required for endocytosis of DRD5 upon agonist stimulation but not for basal receptor trafficking. The sequence is that of Sorting nexin-1 (SNX1) from Macaca fascicularis (Crab-eating macaque).